The primary structure comprises 397 residues: Ornithine aminotransferase (397 aa).

Position 255 is an N6-(pyridoxal phosphate)lysine (Lys255).

The protein belongs to the class-III pyridoxal-phosphate-dependent aminotransferase family. OAT subfamily. Pyridoxal 5'-phosphate is required as a cofactor.

The protein resides in the cytoplasm. It carries out the reaction a 2-oxocarboxylate + L-ornithine = L-glutamate 5-semialdehyde + an L-alpha-amino acid. Its pathway is amino-acid biosynthesis; L-proline biosynthesis; L-glutamate 5-semialdehyde from L-ornithine: step 1/1. In terms of biological role, catalyzes the interconversion of ornithine to glutamate semialdehyde. This chain is Ornithine aminotransferase, found in Macrococcus caseolyticus (strain JCSC5402) (Macrococcoides caseolyticum).